A 418-amino-acid chain; its full sequence is Metacaspase-4 (418 aa).

Residues histidine 86 and cysteine 139 contribute to the active site. At cysteine 139 the chain carries S-nitrosocysteine. The disordered stretch occupies residues 153–172 (GESTKKEAEDEDESEESSSR).

This sequence belongs to the peptidase C14B family. In terms of processing, the two subunits are derived from the precursor sequence by an autocatalytic mechanism. Expressed in roots, cotyledons, leaves, cauline leaves, pollen and embryos.

The protein resides in the cytoplasm. It is found in the cytosol. Its activity is regulated as follows. Activated by Ca(2+) which induces self-processing and accelerates the rate of the enzyme activity, but has no effect on Km. Its function is as follows. Cysteine protease that cleaves specifically after arginine or lysine residues. Does not cleave caspase-specific substrates. Plays a positive regulatory role in biotic and abiotic stress-induced programmed cell death. In Arabidopsis thaliana (Mouse-ear cress), this protein is Metacaspase-4 (AMC4).